Consider the following 51-residue polypeptide: Ovomucoid (51 aa).

The 49-residue stretch at 1-49 (VDCSEYPQPACTTERRPVCGSNNKTYSNKCNFCNAVVKSNGTLTVSHFG) folds into the Kazal-like domain. Intrachain disulfides connect cysteine 3–cysteine 33, cysteine 11–cysteine 30, and cysteine 19–cysteine 51. The N-linked (GlcNAc...) asparagine glycan is linked to asparagine 40.

The protein resides in the secreted. In Polyplectron napoleonis (Palawan peacock-pheasant), this protein is Ovomucoid.